A 399-amino-acid polypeptide reads, in one-letter code: MDQPVMDCPVTLVIKAPNQKYDDQTINCFLDWTVEKLKSHLSKVYPSKPLAKDQRLVYSGKLLLDHLLLKDVLRKQDEYHMVHLVCASRTPPSSPKASTSNKSMGTASISRSSSEHSGSASPASIRQDTSSTYPDPRPGDSIRHRHTSLMYNNLVHSHPFSYLRQEYALNPPPGQASPSTFPAYSAFTPLQMMWWQQLYARQYYIYSQATASNQSPSNGENAQPVPRPVINSESPPPNPPRAPPNVAPEMNPNIQMNAQGGPVMNEEDINRDWLDWMYTVSRAAILLSIVYFYSSFSRFVMVMGAMILVYMHQAGWFPLLQDEGQQHARDNAAEVNPDHVNNNDPQELEHRMDEGLQEEHNNNAGGNVVARRGVLASAWSFITTFFTSLIPEGPPQGAN.

In terms of domain architecture, Ubiquitin-like spans 10–89 (VTLVIKAPNQ…HMVHLVCASR (80 aa)). Disordered regions lie at residues 88-144 (SRTP…SIRH) and 211-250 (ASNQ…APEM). Over residues 95 to 106 (PKASTSNKSMGT) the composition is skewed to polar residues. Positions 107-124 (ASISRSSSEHSGSASPAS) are enriched in low complexity. Over residues 211–221 (ASNQSPSNGEN) the composition is skewed to polar residues. Over residues 234-246 (SPPPNPPRAPPNV) the composition is skewed to pro residues. Residues 299–319 (FVMVMGAMILVYMHQAGWFPL) form a helical membrane-spanning segment.

It is found in the membrane. In terms of biological role, could be involved in the unfolded protein response (UPR) pathway. The sequence is that of Homocysteine-responsive endoplasmic reticulum-resident ubiquitin-like domain member 2 protein (herpud2) from Xenopus tropicalis (Western clawed frog).